The primary structure comprises 665 residues: Prelamin-A/C (665 aa).

Residue methionine 1 is modified to N-acetylmethionine. Residues 1-27 (METPSQRRPTRSGAQASSTPLSPTRIT) are disordered. Residues 1-33 (METPSQRRPTRSGAQASSTPLSPTRITRLQEKE) form a head region. The interaction with MLIP stretch occupies residues 1 to 130 (METPSQRRPT…TKKEGDLLAA (130 aa)). Phosphothreonine is present on threonine 3. Position 5 is a phosphoserine (serine 5). The residue at position 10 (threonine 10) is a Phosphothreonine. Phosphoserine is present on residues serine 12 and serine 18. The residue at position 19 (threonine 19) is a Phosphothreonine. Serine 22 is subject to Phosphoserine. In terms of domain architecture, IF rod spans 31-387 (EKEDLQELND…KLLEGEEERL (357 aa)). The residue at position 32 (lysine 32) is an N6-acetyllysine; alternate. The residue at position 32 (lysine 32) is an N6-succinyllysine; alternate. Lysine 32 participates in a covalent cross-link: Glycyl lysine isopeptide (Lys-Gly) (interchain with G-Cter in SUMO2); alternate. The segment at 34 to 70 (DLQELNDRLAVYIDRVRSLETENAGLRLRITESEEVV) is coil 1A. 3 positions are modified to phosphoserine: serine 51, serine 66, and serine 71. Residues 71–80 (SREVSGIKAA) form a linker 1 region. N6-acetyllysine is present on residues lysine 78 and lysine 97. The coil 1B stretch occupies residues 81–218 (YEAELGDARK…NIYSEELRET (138 aa)). Lysine 97 is covalently cross-linked (Glycyl lysine isopeptide (Lys-Gly) (interchain with G-Cter in SUMO2)). Position 107 is a phosphoserine (serine 107). N6-acetyllysine occurs at positions 108, 114, 123, 135, 144, and 155. Residue lysine 171 is modified to N6-acetyllysine; alternate. Lysine 171 bears the N6-succinyllysine; alternate mark. Lysine 171 participates in a covalent cross-link: Glycyl lysine isopeptide (Lys-Gly) (interchain with G-Cter in SUMO2); alternate. Residues lysine 180, lysine 201, and lysine 208 each carry the N6-acetyllysine modification. Lysine 201 is covalently cross-linked (Glycyl lysine isopeptide (Lys-Gly) (interchain with G-Cter in SUMO2); alternate). A Glycyl lysine isopeptide (Lys-Gly) (interchain with G-Cter in SUMO); alternate cross-link involves residue lysine 201. Residue lysine 208 forms a Glycyl lysine isopeptide (Lys-Gly) (interchain with G-Cter in SUMO2) linkage. A Phosphoserine modification is found at serine 212. Glycyl lysine isopeptide (Lys-Gly) (interchain with G-Cter in SUMO2) cross-links involve residues lysine 219 and lysine 233. Positions 219–242 (KRRHETRLVEIDNGKQREFESRLA) are linker 2. Residues lysine 233, lysine 260, lysine 265, and lysine 270 each carry the N6-acetyllysine modification. The coil 2 stretch occupies residues 243 to 383 (DALQELRAQH…HAYRKLLEGE (141 aa)). Lysine 260 participates in a covalent cross-link: Glycyl lysine isopeptide (Lys-Gly) (interchain with G-Cter in SUMO2); alternate. Lysine 270 participates in a covalent cross-link: Glycyl lysine isopeptide (Lys-Gly) (interchain with G-Cter in SUMO2); alternate. 4 positions are modified to phosphoserine: serine 277, serine 282, serine 301, and serine 307. Lysine 311 is covalently cross-linked (Glycyl lysine isopeptide (Lys-Gly) (interchain with G-Cter in SUMO2); alternate). Lysine 311, lysine 316, and lysine 341 each carry N6-acetyllysine. Glycyl lysine isopeptide (Lys-Gly) (interchain with G-Cter in SUMO2) cross-links involve residues lysine 366 and lysine 378. The disordered stretch occupies residues 384 to 442 (EERLRLSPSPTSQRSRGRASSHSSQSQGGGSVTKKRKLESSESRSSFSQHARTSGRVAV). Positions 384–665 (EERLRLSPSP…TQSSQNCSIM (282 aa)) are tail. Residues serine 390, serine 392, serine 395, serine 398, serine 403, serine 404, serine 406, serine 407, serine 409, and serine 414 each carry the phosphoserine modification. A compositionally biased stretch (low complexity) spans 395–409 (SQRSRGRASSHSSQS). At threonine 416 the chain carries Phosphothreonine. Residue lysine 417 is modified to N6-acetyllysine. Residues lysine 417 and lysine 420 each participate in a glycyl lysine isopeptide (Lys-Gly) (interchain with G-Cter in SUMO2) cross-link. The Nuclear localization signal signature appears at 417–422 (KKRKLE). 4 positions are modified to phosphoserine: serine 423, serine 426, serine 429, and serine 431. The LTD domain occupies 428-545 (SSFSQHARTS…EEVAMRKLVR (118 aa)). Lysine 450 is covalently cross-linked (Glycyl lysine isopeptide (Lys-Gly) (interchain with G-Cter in SUMO2); alternate). N6-acetyllysine occurs at positions 450 and 457. Phosphoserine is present on residues serine 458 and serine 463. Residues lysine 470 and lysine 486 each participate in a glycyl lysine isopeptide (Lys-Gly) (interchain with G-Cter in SUMO2) cross-link. Position 486 is an N6-acetyllysine (lysine 486). Threonine 496 carries the post-translational modification Phosphothreonine. Serine 500 bears the Phosphoserine mark. Residues threonine 505 and threonine 510 each carry the phosphothreonine modification. Serine 546 is modified (phosphoserine). The residue at position 548 (threonine 548) is a Phosphothreonine. A compositionally biased stretch (acidic residues) spans 552–561 (DNDDEEEDGD). The tract at residues 552–577 (DNDDEEEDGDELLHHHRGSHCSSSGD) is disordered. Serine 570 and serine 573 each carry phosphoserine. Lysine 599 is covalently cross-linked (Glycyl lysine isopeptide (Lys-Gly) (interchain with G-Cter in SUMO2); alternate). A Glycyl lysine isopeptide (Lys-Gly) (interchain with G-Cter in SUMO1); alternate cross-link involves residue lysine 599. 4 positions are modified to phosphoserine: serine 613, serine 614, serine 617, and serine 620. O-linked (GlcNAc) serine glycans are attached at residues serine 626 and serine 629. Phosphoserine is present on residues serine 629, serine 633, serine 637, and serine 653. A propeptide spans 648 to 662 (LLGNSSPRTQSSQNC) (removed in Lamin-A/C form). Cysteine 662 is subject to Cysteine methyl ester. Cysteine 662 carries the S-farnesyl cysteine lipid modification. A propeptide spans 663-665 (SIM) (removed in Prelamin-A/C form and in Lamin-A/C form).

It belongs to the intermediate filament family. Homodimer of lamin A and lamin C. Lamin dimers then assemble into dimeric head-to-tail polymers. Ultimately, two head-to-tail polymers assemble laterally into a protofilament with a uniformly shaped rod of 3.5 nm in diameter. Interacts with lamin-associated polypeptides IA, IB and TMPO-alpha, RB1 and with emerin. Interacts with SREBF1, SREBF2, SUN2 and TMEM43. Interacts with TMEM201. Proteolytically processed isoform A interacts with NARF. Interacts with SUN1. Interacts with MLIP. Interacts with DMPK; may regulate nuclear envelope stability. Interacts with SUV39H1; the interaction increases stability of SUV39H1. Interacts with SYNE2. Interacts with ITSN1 isoform 2. Interacts with IFFO1; enables the formation of an interior nucleoskeleton that is recruited to DNA double-strand breaks. As to quaternary structure, interacts with EMD. In terms of assembly, interacts (via C-terminus) with LEMD2 (via N-terminus) (in vitro). In terms of processing, proteolytic cleavage of the C-terminal of 18 residues of prelamin-A/C results in the production of lamin-A/C. The prelamin-A/C maturation pathway includes farnesylation of CAAX motif by protein farnesyltransferase (FNTA and FNTB), removal of the last three amino acids (-AAX) by RCE1/FACE2 and/or ZMPSTE24, methylation of the C-terminal cysteine by ICMT and endoproteolytic removal of the last 15 C-terminal amino acids by ZMPSTE24. Proteolytic cleavage requires prior farnesylation and methylation, and absence of these blocks cleavage. Farnesylation of prelamin-A/C facilitates nuclear envelope targeting. Post-translationally, phosphorylation plays a key role in lamin organization, subcellular localization and nuclear envelope disintegration. Phosphorylation by CDK1 at Ser-22 and Ser-392 at the onset of mitosis drives lamin disassembly and nuclear envelope breakdown. Phosphorylation at Ser-22 and Ser-392 during interphase promotes localization to the nucleoplasm and regulates lamina assembly. Phosphorylation at Ser-22, Ser-392 and Ser-629 during interphase causes redistribution between the nucleus and the cytoplasm. Phosphorylation at Ser-22 by CDK1 regulates matrix stiffness. Phosphorylation status of Ser-22 determines its localization between double-strand break (DSB) sites and the nuclear matrix. Phosphorylated by ATR at Ser-282 in response to DNA damage, leading to lamin disassembly and nuclear envelope rupture. Phosphorylation also regulates stability in micronuclei arising from genome instability: phosphorylation at Ser-395 by ATR in response to genome instability and double-stranded DNA breaks primes LMNA for subsequent phosphorylation at Ser-392 by CDK1 and micronuclei envelope rupture. The rupture of micronuclear envelope triggers the cGAS-STING pathway thereby activating the type I interferon response and innate immunity. In terms of processing, acetylation by KAT8 is required for nuclear architecture. Sumoylation is necessary for the localization to the nuclear envelope.

It is found in the nucleus lamina. It localises to the nucleus envelope. Its subcellular location is the nucleus. The protein localises to the nucleoplasm. The protein resides in the nucleus matrix. Functionally, lamins are intermediate filament proteins that assemble into a filamentous meshwork, and which constitute the major components of the nuclear lamina, a fibrous layer on the nucleoplasmic side of the inner nuclear membrane. Lamins provide a framework for the nuclear envelope, bridging the nuclear envelope and chromatin, thereby playing an important role in nuclear assembly, chromatin organization, nuclear membrane and telomere dynamics. Lamin A and C also regulate matrix stiffness by conferring nuclear mechanical properties. The structural integrity of the lamina is strictly controlled by the cell cycle, as seen by the disintegration and formation of the nuclear envelope in prophase and telophase, respectively. Lamin A and C are present in equal amounts in the lamina of mammals. Also invoved in DNA repair: recruited by DNA repair proteins XRCC4 and IFFO1 to the DNA double-strand breaks (DSBs) to prevent chromosome translocation by immobilizing broken DNA ends. Required for normal development of peripheral nervous system and skeletal muscle and for muscle satellite cell proliferation. Required for osteoblastogenesis and bone formation. Also prevents fat infiltration of muscle and bone marrow, helping to maintain the volume and strength of skeletal muscle and bone. Required for cardiac homeostasis. Prelamin-A/C can accelerate smooth muscle cell senescence. It acts to disrupt mitosis and induce DNA damage in vascular smooth muscle cells (VSMCs), leading to mitotic failure, genomic instability, and premature senescence. The protein is Prelamin-A/C (Lmna) of Rattus norvegicus (Rat).